The following is a 460-amino-acid chain: Glycine--tRNA ligase (460 aa).

Residues R98 and E172 each contribute to the substrate site. ATP is bound by residues 204 to 206 (RNE), 214 to 219 (FRTREF), 288 to 289 (EL), and 332 to 335 (GADR). Position 219–223 (219–223 (FEQME)) interacts with substrate. 328 to 332 (EPSLG) serves as a coordination point for substrate.

The protein belongs to the class-II aminoacyl-tRNA synthetase family. As to quaternary structure, homodimer.

The protein localises to the cytoplasm. It catalyses the reaction tRNA(Gly) + glycine + ATP = glycyl-tRNA(Gly) + AMP + diphosphate. In terms of biological role, catalyzes the attachment of glycine to tRNA(Gly). This is Glycine--tRNA ligase from Geobacillus kaustophilus (strain HTA426).